Reading from the N-terminus, the 371-residue chain is Protein SOMBRERO (371 aa).

The NAC domain maps to 17–166 (VPPGFRFHPT…GWVVCRVFKK (150 aa)). The DNA-binding element occupies 118 to 172 (IGLRKTLVFYTGRAPHGQKTEWIMHEYRLDDSENEIQEDGWVVCRVFKKKNHFRG). 2 disordered regions span residues 176–213 (EQEQ…LILH) and 316–355 (VQNH…NQRF). A compositionally biased stretch (basic and acidic residues) spans 192 to 201 (NDHDHHHHID). 2 stretches are compositionally biased toward low complexity: residues 202 to 213 (SNSNNHSPLILH) and 340 to 349 (GNNNGGSSSS).

As to expression, accumulates in maturing root cap cells, in both COL and LRC cells.

Its subcellular location is the nucleus. Its function is as follows. Transcription regulator. Together with BRN1 and BRN2, regulates cellular maturation of root cap. Represses stem cell-like divisions in the root cap daughter cells, and thus promotes daughter cell fate. Inhibits expression of its positive regulator FEZ in a feedback loop for controlled switches in cell division plane. Promotes the expression of genes involved in secondary cell walls (SCW) biosynthesis. The sequence is that of Protein SOMBRERO (SMB) from Arabidopsis thaliana (Mouse-ear cress).